Reading from the N-terminus, the 181-residue chain is Peptide deformylase 2 (181 aa).

Fe cation contacts are provided by cysteine 109 and histidine 151. The active site involves glutamate 152. Histidine 155 contacts Fe cation.

The protein belongs to the polypeptide deformylase family. Fe(2+) is required as a cofactor.

The catalysed reaction is N-terminal N-formyl-L-methionyl-[peptide] + H2O = N-terminal L-methionyl-[peptide] + formate. Functionally, removes the formyl group from the N-terminal Met of newly synthesized proteins. Requires at least a dipeptide for an efficient rate of reaction. N-terminal L-methionine is a prerequisite for activity but the enzyme has broad specificity at other positions. In Shewanella oneidensis (strain ATCC 700550 / JCM 31522 / CIP 106686 / LMG 19005 / NCIMB 14063 / MR-1), this protein is Peptide deformylase 2.